The sequence spans 614 residues: Dolichyl-diphosphooligosaccharide--protein glycosyltransferase subunit 1A (614 aa).

The first 25 residues, Met-1–Ser-25, serve as a signal peptide directing secretion. Over Asp-26–Asn-432 the chain is Lumenal. Residues Asn-94 and Asn-299 are each glycosylated (N-linked (GlcNAc...) asparagine). Lys-311 is covalently cross-linked (Glycyl lysine isopeptide (Lys-Gly) (interchain with G-Cter in ubiquitin)). An N-linked (GlcNAc...) asparagine glycan is attached at Asn-352. The chain crosses the membrane as a helical span at residues Leu-433–Ile-453. Residues Tyr-454 to Ile-614 are Cytoplasmic-facing.

The protein belongs to the OST1 family. Component of the oligosaccharyltransferase (OST) complex.

The protein localises to the endoplasmic reticulum membrane. Its pathway is protein modification; protein glycosylation. In terms of biological role, subunit of the oligosaccharyl transferase (OST) complex that catalyzes the initial transfer of a defined glycan (Glc(3)Man(9)GlcNAc(2) in eukaryotes) from the lipid carrier dolichol-pyrophosphate to an asparagine residue within an Asn-X-Ser/Thr consensus motif in nascent polypeptide chains, the first step in protein N-glycosylation. N-glycosylation occurs cotranslationally and the complex associates with the Sec61 complex at the channel-forming translocon complex that mediates protein translocation across the endoplasmic reticulum (ER). All subunits are required for a maximal enzyme activity. This chain is Dolichyl-diphosphooligosaccharide--protein glycosyltransferase subunit 1A (OST1A), found in Arabidopsis thaliana (Mouse-ear cress).